The primary structure comprises 412 residues: Multifunctional CCA protein (412 aa).

G8 and R11 together coordinate ATP. 2 residues coordinate CTP: G8 and R11. Residues D21 and D23 each contribute to the Mg(2+) site. 3 residues coordinate ATP: R91, R137, and R140. Positions 91, 137, and 140 each coordinate CTP. One can recognise an HD domain in the interval 228-329 (TGIHTLMTLS…VKLFDSIDAW (102 aa)).

It belongs to the tRNA nucleotidyltransferase/poly(A) polymerase family. Bacterial CCA-adding enzyme type 1 subfamily. In terms of assembly, monomer. Can also form homodimers and oligomers. Mg(2+) serves as cofactor. Ni(2+) is required as a cofactor.

The catalysed reaction is a tRNA precursor + 2 CTP + ATP = a tRNA with a 3' CCA end + 3 diphosphate. It carries out the reaction a tRNA with a 3' CCA end + 2 CTP + ATP = a tRNA with a 3' CCACCA end + 3 diphosphate. Functionally, catalyzes the addition and repair of the essential 3'-terminal CCA sequence in tRNAs without using a nucleic acid template. Adds these three nucleotides in the order of C, C, and A to the tRNA nucleotide-73, using CTP and ATP as substrates and producing inorganic pyrophosphate. tRNA 3'-terminal CCA addition is required both for tRNA processing and repair. Also involved in tRNA surveillance by mediating tandem CCA addition to generate a CCACCA at the 3' terminus of unstable tRNAs. While stable tRNAs receive only 3'-terminal CCA, unstable tRNAs are marked with CCACCA and rapidly degraded. The sequence is that of Multifunctional CCA protein from Escherichia coli O127:H6 (strain E2348/69 / EPEC).